We begin with the raw amino-acid sequence, 81 residues long: Acyl carrier protein (81 aa).

A Carrier domain is found at 4 to 79; the sequence is SEIFGKVKDI…AAVDFIAGKV (76 aa). Ser-39 is subject to O-(pantetheine 4'-phosphoryl)serine.

This sequence belongs to the acyl carrier protein (ACP) family. Post-translationally, 4'-phosphopantetheine is transferred from CoA to a specific serine of apo-ACP by AcpS. This modification is essential for activity because fatty acids are bound in thioester linkage to the sulfhydryl of the prosthetic group.

It localises to the cytoplasm. Its pathway is lipid metabolism; fatty acid biosynthesis. In terms of biological role, carrier of the growing fatty acid chain in fatty acid biosynthesis. This is Acyl carrier protein from Acaryochloris marina (strain MBIC 11017).